The sequence spans 67 residues: Large ribosomal subunit protein bL35 (67 aa).

The protein belongs to the bacterial ribosomal protein bL35 family.

This chain is Large ribosomal subunit protein bL35, found in Deinococcus geothermalis (strain DSM 11300 / CIP 105573 / AG-3a).